The chain runs to 523 residues: Putative pentatricopeptide repeat-containing protein At3g15200 (523 aa).

PPR repeat units follow at residues 142–172 (SSMLYNEILDVLGKMRRFEEFHQVFDEMSKR), 177–211 (NEKTYEVLLNRYAAAHKVDEAVGVFERRKEFGIDD), 212–242 (DLVAFHGLLMWLCRYKHVEFAETLFCSRRRE), 246–280 (DIKAMNMILNGWCVLGNVHEAKRFWKDIIASKCRP), 281–315 (DVVSYGTMINALTKKGKLGKAMELYRAMWDTRRNP), 316–350 (DVKICNNVIDALCFKKRIPEALEVFREISEKGPDP), 351–385 (NVVTYNSLLKHLCKIRRTEKVWELVEEMELKGGSC), 388–418 (NDVTFSYLLKYSQRSKDVDIVLERMAKNKCE), 420–454 (TSDLYNLMFRLYVQWDKEEKVREIWSEMERSGLGP), and 455–489 (DQRTYTIRIHGLHTKGKIGEALSYFQEMMSKGMVP). The interval 497-523 (LNQNKTKPRVEDKMLRSNLTSEESESD) is disordered.

The protein belongs to the PPR family. P subfamily.

The polypeptide is Putative pentatricopeptide repeat-containing protein At3g15200 (Arabidopsis thaliana (Mouse-ear cress)).